A 285-amino-acid polypeptide reads, in one-letter code: Large ribosomal subunit protein uL1m (285 aa).

Residues 1–19 (MLSVVAIPKICVTGPARRC) constitute a mitochondrion transit peptide.

This sequence belongs to the universal ribosomal protein uL1 family. As to quaternary structure, component of the mitochondrial large ribosomal subunit (mt-LSU). Mature yeast 74S mitochondrial ribosomes consist of a small (37S) and a large (54S) subunit. The 37S small subunit contains a 15S ribosomal RNA (15S mt-rRNA) and 34 different proteins. The 54S large subunit contains a 21S rRNA (21S mt-rRNA) and 46 different proteins.

The protein resides in the mitochondrion. Its function is as follows. Component of the mitochondrial ribosome (mitoribosome), a dedicated translation machinery responsible for the synthesis of mitochondrial genome-encoded proteins, including at least some of the essential transmembrane subunits of the mitochondrial respiratory chain. The mitoribosomes are attached to the mitochondrial inner membrane and translation products are cotranslationally integrated into the membrane. The sequence is that of Large ribosomal subunit protein uL1m (MRPL1) from Saccharomyces cerevisiae (strain ATCC 204508 / S288c) (Baker's yeast).